The sequence spans 80 residues: CLAVATA3/ESR (CLE)-related protein 40 (80 aa).

The N-terminal stretch at 1–25 is a signal peptide; the sequence is MAAMKYKGSVFIILVILLLSSSLLA. A disordered region spans residues 45–80; that stretch reads MKKEKKIDGGTANEVEERQVPTGSDPLHHKHIPFTP. Residue proline 65 is modified to Hydroxyproline.

This sequence belongs to the CLV3/ESR signal peptide family. In terms of tissue distribution, mostly expressed at low levels in stems and apex, and, to a lower extent, in roots, seedlings, leaves, flowers, siliques and pollen.

The protein localises to the secreted. It localises to the extracellular space. Extracellular signal peptide secreted by differentiated root cells that regulates root cell fate. Acts with ACR4 as a ligand-receptor pair in a signal transduction pathway, coordinating movement of the root tip and organization of cell divisions in the root meristem. Promotes cell differentiation in the distal root meristem in a dose-dependent manner, especially the transition from columella stem cells (CSC) daughters into columella cells (CCs). Induces ACR4 expression in root quiescent center (QC). Involved in WUX5 QC-specific expression pattern regulation. Regulates the transition of protophloem cells from proliferation to differentiation, thus impinging on postembryonic growth capacity of the root meristem; this signaling pathway requires CRN and CLV2. This chain is CLAVATA3/ESR (CLE)-related protein 40, found in Arabidopsis thaliana (Mouse-ear cress).